Reading from the N-terminus, the 242-residue chain is HTH-type transcriptional regulator GadW (242 aa).

The 98-residue stretch at 139 to 236 (GKVERLISFD…GVTPHQFSQH (98 aa)) folds into the HTH araC/xylS-type domain. 2 consecutive DNA-binding regions (H-T-H motif) follow at residues 156 to 177 (RDIA…QDEN) and 203 to 226 (LHTI…RQYY).

Homodimer.

Depending on the conditions (growth phase and medium), acts as a positive or negative regulator of gadA and gadBC. Repression occurs directly or via the repression of the expression of gadX. Activation occurs directly by the binding of GadW to the gadA and gadBC promoters. In Escherichia coli O6:H1 (strain CFT073 / ATCC 700928 / UPEC), this protein is HTH-type transcriptional regulator GadW (gadW).